Consider the following 224-residue polypeptide: Deoxyribose-phosphate aldolase (224 aa).

Asp91 acts as the Proton donor/acceptor in catalysis. The Schiff-base intermediate with acetaldehyde role is filled by Lys152. Lys181 (proton donor/acceptor) is an active-site residue.

It belongs to the DeoC/FbaB aldolase family. DeoC type 1 subfamily.

It localises to the cytoplasm. The catalysed reaction is 2-deoxy-D-ribose 5-phosphate = D-glyceraldehyde 3-phosphate + acetaldehyde. It functions in the pathway carbohydrate degradation; 2-deoxy-D-ribose 1-phosphate degradation; D-glyceraldehyde 3-phosphate and acetaldehyde from 2-deoxy-alpha-D-ribose 1-phosphate: step 2/2. Catalyzes a reversible aldol reaction between acetaldehyde and D-glyceraldehyde 3-phosphate to generate 2-deoxy-D-ribose 5-phosphate. The protein is Deoxyribose-phosphate aldolase of Mycoplasma pneumoniae (strain ATCC 29342 / M129 / Subtype 1) (Mycoplasmoides pneumoniae).